Reading from the N-terminus, the 247-residue chain is Ribonuclease 3 (247 aa).

Positions 5–147 constitute an RNase III domain; the sequence is LIALQERLQH…LIGAVYLDAG (143 aa). Glu40 is a Mg(2+) binding site. Asp44 is a catalytic residue. The segment at 104–124 is disordered; it reads QRRSRRRCADELQPDEAGSGG. Mg(2+) is bound by residues Asp133 and Glu136. Residue Glu136 is part of the active site. The DRBM domain maps to 174–244; it reads DAKTALQEWL…AAAMLATLKA (71 aa).

This sequence belongs to the ribonuclease III family. In terms of assembly, homodimer. It depends on Mg(2+) as a cofactor.

The protein localises to the cytoplasm. It catalyses the reaction Endonucleolytic cleavage to 5'-phosphomonoester.. In terms of biological role, digests double-stranded RNA. Involved in the processing of primary rRNA transcript to yield the immediate precursors to the large and small rRNAs (23S and 16S). Processes some mRNAs, and tRNAs when they are encoded in the rRNA operon. Processes pre-crRNA and tracrRNA of type II CRISPR loci if present in the organism. In Verminephrobacter eiseniae (strain EF01-2), this protein is Ribonuclease 3.